The chain runs to 589 residues: Growth factor receptor-bound protein 10 (589 aa).

2 disordered regions span residues 1-51 (MALA…EDDV) and 77-107 (LHNG…VPRS). Phosphoserine is present on Ser-99. Ser-145 bears the Phosphoserine; by MTOR, MAPK1 and MAPK3 mark. A Ras-associating domain is found at 161–245 (AKQDVKVFSE…SKFLFRKNYA (85 aa)). Residues 285–394 (CPEIQGFLHV…WMTAFRLLKY (110 aa)) form the PH domain. Phosphoserine; by MAPK1 and MAPK3; in vitro is present on Ser-413. Phosphoserine; by MTOR and PKB/AKT1 is present on Ser-423. Position 426 is a phosphoserine (Ser-426). Ser-471 is modified (phosphoserine; by MTOR, MAPK1 and MAPK3). The SH2 domain maps to 488–584 (WFHGRISREE…VLPCKLKHHC (97 aa)).

The protein belongs to the GRB7/10/14 family. As to quaternary structure, interacts with ligand-activated tyrosine kinase receptors, including FGFR1, INSR, IGF1R, MET and PDGFRB in a phosphotyrosine-dependent manner through the SH2 domain. Poorly binds to the EGFR. Directly interacts with MAP3K14/NIK and is recruited to the EGFR-ERBB2 complex. Interacts with GIGYF1/PERQ1 and GIGYF2/TNRC15. When unphosphorylated, interacts with AKT1 and when phosphorylated with YWHAE/14-3-3 epsilon. Interacts with NEDD4. Interacts with LRP6, thus interfering with the binding of AXIN1 to LRP6. Binds relatively non-specifically to several phosphoinositides, including PI(5)P, PI(4,5)P2, PI(3,4)P2 and PI(3,4,5)P3, with modest affinities through the PH domain. Binds to activated NRAS. Post-translationally, phosphorylated on serine residues upon EGF, FGF and PDGF stimulation.

It is found in the cytoplasm. With respect to regulation, phosphorylation by mTORC1 stabilizes and activates GRB10 constituting a feedback pathway by which mTORC1 inhibits INSR-dependent signaling. In terms of biological role, adapter protein which modulates coupling of a number of cell surface receptor kinases with specific signaling pathways. Binds to, and suppress signals from, activated receptors tyrosine kinases, including the insulin (INSR) and insulin-like growth factor (IGF1R) receptors. The inhibitory effect can be achieved by 2 mechanisms: interference with the signaling pathway and increased receptor degradation. Delays and reduces AKT1 phosphorylation in response to insulin stimulation. Blocks association between INSR and IRS1 and IRS2 and prevents insulin-stimulated IRS1 and IRS2 tyrosine phosphorylation. Recruits NEDD4 to IGF1R, leading to IGF1R ubiquitination, increased internalization and degradation by both the proteasomal and lysosomal pathways. A similar role in the mediation of ubiquitination also has been suggested with INSR. Negatively regulates Wnt signaling by interacting with LRP6 intracellular portion and interfering with the binding of AXIN1 to LRP6. Positive regulator of the KDR/VEGFR-2 signaling pathway. May inhibit NEDD4-mediated degradation of KDR/VEGFR-2. In Sus scrofa (Pig), this protein is Growth factor receptor-bound protein 10 (Grb10).